Reading from the N-terminus, the 487-residue chain is UDP-N-acetylmuramate--L-alanine ligase (487 aa).

129–135 (GTHGKTT) serves as a coordination point for ATP.

The protein belongs to the MurCDEF family.

The protein resides in the cytoplasm. The enzyme catalyses UDP-N-acetyl-alpha-D-muramate + L-alanine + ATP = UDP-N-acetyl-alpha-D-muramoyl-L-alanine + ADP + phosphate + H(+). It functions in the pathway cell wall biogenesis; peptidoglycan biosynthesis. In terms of biological role, cell wall formation. The polypeptide is UDP-N-acetylmuramate--L-alanine ligase (Aliivibrio fischeri (strain ATCC 700601 / ES114) (Vibrio fischeri)).